We begin with the raw amino-acid sequence, 255 residues long: PHD finger protein ALFIN-LIKE 4 (255 aa).

At M1 the chain carries N-acetylmethionine. Residues 145–200 (GKDKSSVSNNSSNRSKSSSKRGSESRAKFSKPEPKDDEEEEEEGVEEEDEDEQGET) form a disordered region. Positions 150 to 160 (SVSNNSSNRSK) are enriched in low complexity. Residues 165–178 (RGSESRAKFSKPEP) show a composition bias toward basic and acidic residues. Acidic residues predominate over residues 179–198 (KDDEEEEEEGVEEEDEDEQG). The PHD-type zinc-finger motif lies at 199 to 251 (ETQCGACGESYAADEFWICCDLCEMWFHGKCVKITPARAEHIKQYKCPSCSNK).

The protein belongs to the Alfin family. In terms of assembly, interacts with H3K4me3 and to a lesser extent with H3K4me2. Ubiquitously expressed.

Its subcellular location is the nucleus. Functionally, histone-binding component that specifically recognizes H3 tails trimethylated on 'Lys-4' (H3K4me3), which mark transcription start sites of virtually all active genes. In Arabidopsis thaliana (Mouse-ear cress), this protein is PHD finger protein ALFIN-LIKE 4 (AL4).